A 766-amino-acid chain; its full sequence is MEESNPAPTSCTSKGKHSKVSDLISHFEGGSVLSSYIDLQKDSTMNLNIPQTLGQPGLTSSPPRKFLPQHSPQKQENDPDQTQGQHGCLANGVVAAQNQMECEDEKETTLSPEMAIQTAAASPDTHVLNGERNETITDSASSIANSHDENASDSSCRTPGTDLGLPSKEGEPGMDAELQERENGVNTMGLDTLDQHHEVKETNEQKLHKIATELLLTERAYVSRLDLLDQVFYCKLLEEANRGSFPAEMVNKIFSNISSINAFHSKFLLPELEKRMQEWETTPRIGDILQKLAPFLKMYGEYVKGFDNAVELVKTMTERVPQFKSVTEEIQKQKICGSLTLQHHMLEPIQRIPRYEMLLKDYLKKLSPDSPDWNDAKKSLEIISTAASHSNSAIRKMENLKKLLEIYEMLGEEEDIVNPSNELIKEGQILKLAARNTSAQERYLFLFNNMLLYCVPRFSLVGSKFTVRTRVGIDGMKIVETHNEEYPHTFQISGKERTLELQASSEQDKEEWIKALQESIDAFHQRHETFRNAIAKENDIPLEVSTAELGKRAPRWIRDNEVTMCMKCKESFNALTRRRHHCRACGHVVCWKCSDYKAQLEYDGGRLNKVCKDCYQIISGFTDSEEKKRRGILEIESAEVSGNSEVCSFLQYMEKSKPWQKIWCVIPKQDPLVLYMYGAPQDVRAQATIPLLGYVVDDMPKSADLPHSFKLTQSKSVHSFAADNEELKQKWLKIILLAVTGETPDGPSEHLATLNNLPGPKKKSEC.

The interval 1-150 (MEESNPAPTS…SSIANSHDEN (150 aa)) is actin filament-binding. 2 stretches are compositionally biased toward polar residues: residues 47-62 (LNIPQTLGQPGLTSSP) and 70-85 (HSPQKQENDPDQTQGQ). 2 disordered regions span residues 47–86 (LNIPQTLGQPGLTSSPPRKFLPQHSPQKQENDPDQTQGQH) and 143–173 (IANSHDENASDSSCRTPGTDLGLPSKEGEPG). Positions 206 to 393 (KLHKIATELL…STAASHSNSA (188 aa)) constitute a DH domain. One can recognise a PH 1 domain in the interval 422 to 521 (ELIKEGQILK…WIKALQESID (100 aa)). Residues 559–619 (DNEVTMCMKC…VCKDCYQIIS (61 aa)) form an FYVE-type zinc finger. Zn(2+) is bound by residues Cys565, Cys568, Cys582, Cys585, Cys590, Cys593, Cys611, and Cys614. The PH 2 domain maps to 643-740 (NSEVCSFLQY…WLKIILLAVT (98 aa)). Phosphoserine is present on residues Ser702 and Ser716. The interval 746–766 (GPSEHLATLNNLPGPKKKSEC) is disordered.

As to quaternary structure, homooligomer. In terms of tissue distribution, detected in thymus, lung, heart, skeletal muscle, small intestine, liver, kidney, spleen and testis. Expressed in all parts of the brain and in the spinal cord at embryonic, postnatal, and adult stages. Levels of expression are lower in postnatal and adult tissues than in embryonic tissues.

It localises to the cytoplasm. The protein localises to the cytoskeleton. Its subcellular location is the cell projection. It is found in the filopodium. Its function is as follows. Activates CDC42, a member of the Ras-like family of Rho- and Rac proteins, by exchanging bound GDP for free GTP. Activates MAPK8. Plays a role in regulating the actin cytoskeleton and cell shape. Promotes the formation of lamellipodia. This Mus musculus (Mouse) protein is FYVE, RhoGEF and PH domain-containing protein 4 (Fgd4).